The primary structure comprises 519 residues: O-fucosyltransferase 31 (519 aa).

A helical; Signal-anchor for type II membrane protein transmembrane segment spans residues 18-38; sequence ALAGVFVLLFPILYPNLFSPL. An N-linked (GlcNAc...) asparagine glycan is attached at N131. A substrate-binding site is contributed by 302-304; the sequence is HLR. Residues N373 and N474 are each glycosylated (N-linked (GlcNAc...) asparagine).

The protein belongs to the glycosyltransferase GT106 family.

The protein resides in the membrane. Its pathway is glycan metabolism. In Arabidopsis thaliana (Mouse-ear cress), this protein is O-fucosyltransferase 31.